The following is a 130-amino-acid chain: Small ribosomal subunit protein uS9 (130 aa).

The protein belongs to the universal ribosomal protein uS9 family.

This Thiobacillus denitrificans (strain ATCC 25259 / T1) protein is Small ribosomal subunit protein uS9.